The chain runs to 150 residues: Putative antitoxin VapB45 (150 aa).

The disordered stretch occupies residues Ala-124–Arg-150. Residues Val-141–Arg-150 are compositionally biased toward basic and acidic residues.

The protein belongs to the phD/YefM antitoxin family.

In terms of biological role, possibly the antitoxin component of a type II toxin-antitoxin (TA) system. Its cognate toxin is VapC45 (Potential). In Mycobacterium tuberculosis (strain CDC 1551 / Oshkosh), this protein is Putative antitoxin VapB45 (vapB45).